Reading from the N-terminus, the 97-residue chain is Unclassified hydrophobin F (97 aa).

The first 17 residues, 1-17 (MRVSALAFAAVLSLVSA), serve as a signal peptide directing secretion. 4 disulfide bridges follow: cysteine 24-cysteine 75, cysteine 39-cysteine 67, cysteine 40-cysteine 58, and cysteine 76-cysteine 85.

It is found in the secreted. It localises to the cell wall. In terms of biological role, aerial growth, conidiation, and dispersal of filamentous fungi in the environment rely upon a capability of their secreting small amphipathic proteins called hydrophobins (HPBs) with low sequence identity. Class I can self-assemble into an outermost layer of rodlet bundles on aerial cell surfaces, conferring cellular hydrophobicity that supports fungal growth, development and dispersal; whereas Class II form highly ordered films at water-air interfaces through intermolecular interactions but contribute nothing to the rodlet structure. In P.expansum, hydrophobins contribute to germination, tolerance to cold stress and mycotoxins patulin and citrinin production. HfbC, HfbD, HfbE, and HfbF have functional redundancy in fungal surface hydrophobicity. The polypeptide is Unclassified hydrophobin F (Penicillium expansum (Blue mold rot fungus)).